We begin with the raw amino-acid sequence, 357 residues long: Cobalt-precorrin-5B C(1)-methyltransferase (357 aa).

The protein belongs to the CbiD family.

It catalyses the reaction Co-precorrin-5B + S-adenosyl-L-methionine = Co-precorrin-6A + S-adenosyl-L-homocysteine. The protein operates within cofactor biosynthesis; adenosylcobalamin biosynthesis; cob(II)yrinate a,c-diamide from sirohydrochlorin (anaerobic route): step 6/10. Functionally, catalyzes the methylation of C-1 in cobalt-precorrin-5B to form cobalt-precorrin-6A. The chain is Cobalt-precorrin-5B C(1)-methyltransferase from Gloeobacter violaceus (strain ATCC 29082 / PCC 7421).